The chain runs to 266 residues: ATP synthase subunit a (266 aa).

6 consecutive transmembrane segments (helical) span residues 38 to 58 (KQML…LLAA), 99 to 119 (LLFS…IPLI), 126 to 146 (HVGG…AIGV), 162 to 182 (GVPV…NFLV), 191 to 211 (LFAT…GIEY), and 224 to 244 (SVLV…IMAL).

It belongs to the ATPase A chain family. In terms of assembly, F-type ATPases have 2 components, CF(1) - the catalytic core - and CF(0) - the membrane proton channel. CF(1) has five subunits: alpha(3), beta(3), gamma(1), delta(1), epsilon(1). CF(0) has three main subunits: a(1), b(2) and c(9-12). The alpha and beta chains form an alternating ring which encloses part of the gamma chain. CF(1) is attached to CF(0) by a central stalk formed by the gamma and epsilon chains, while a peripheral stalk is formed by the delta and b chains.

The protein localises to the cell membrane. Its function is as follows. Key component of the proton channel; it plays a direct role in the translocation of protons across the membrane. The chain is ATP synthase subunit a from Arthrobacter sp. (strain FB24).